Reading from the N-terminus, the 469-residue chain is Glutamine synthetase (469 aa).

A GS beta-grasp domain is found at 13–97 (HEVKFVDLRF…IRCDILEPGT (85 aa)). One can recognise a GS catalytic domain in the interval 105–469 (PRSIAKRAED…PVEFELYYSV (365 aa)). Mg(2+)-binding residues include Glu130 and Glu132. Glu208 contacts ATP. Mg(2+) is bound by residues Glu213 and Glu221. Residues 265-266 (NG) and Gly266 contribute to the L-glutamate site. His270 provides a ligand contact to Mg(2+). Residues 272–274 (HMS) and Ser274 each bind ATP. L-glutamate is bound by residues Arg322, Glu328, and Arg340. Residues Arg340, Arg345, and Lys353 each contribute to the ATP site. Residue Glu358 coordinates Mg(2+). L-glutamate is bound at residue Arg360. The residue at position 398 (Tyr398) is an O-AMP-tyrosine.

It belongs to the glutamine synthetase family. Oligomer of 12 subunits arranged in the form of two hexameric ring. Requires Mg(2+) as cofactor.

The protein localises to the cytoplasm. The enzyme catalyses L-glutamate + NH4(+) + ATP = L-glutamine + ADP + phosphate + H(+). Its activity is regulated as follows. The activity of this enzyme could be controlled by adenylation under conditions of abundant glutamine. Its function is as follows. Catalyzes the ATP-dependent biosynthesis of glutamine from glutamate and ammonia. The chain is Glutamine synthetase from Escherichia coli O157:H7.